The primary structure comprises 1256 residues: Splicing factor, arginine/serine-rich 19 (1256 aa).

Disordered regions lie at residues 1–33 (MEEE…SPSA), 158–343 (GKTV…APRR), 371–395 (ALSL…PEEE), 408–1030 (PRQP…TLPP), 1112–1152 (GSLP…DKYL), and 1221–1256 (FRKH…LPPL). Basic and acidic residues predominate over residues 7 to 27 (SRGKTEESGEDRGDGPPDRDP). Residues 192-206 (SSASSSPSPSPSSSS) are compositionally biased toward low complexity. Residues 207–222 (PSPPPPPPPPPPPALP) show a composition bias toward pro residues. Residues 227-236 (DIYDPFHPTD) show a composition bias toward basic and acidic residues. Ser-240 carries the post-translational modification Phosphoserine. Residues 255–265 (TGSNPSSSAGT) are compositionally biased toward polar residues. Acidic residues predominate over residues 268 to 282 (PEEEEEEEEEEEEEG). At Thr-328 the chain carries Phosphothreonine. Acidic residues predominate over residues 382 to 393 (PEIEEGEIVQPE). The span at 412-424 (PASVATLASVAAP) shows a compositional bias: low complexity. 2 positions are modified to phosphoserine: Ser-442 and Ser-447. Over residues 478-489 (KILTQRRERYRQ) the composition is skewed to basic residues. Ser-491, Ser-493, Ser-510, Ser-518, and Ser-520 each carry phosphoserine. Basic residues-rich tracts occupy residues 538-553 (TARR…RSRS) and 560-577 (RGGH…RRRS). Phosphoserine is present on residues Ser-577 and Ser-579. A compositionally biased stretch (basic residues) spans 592-611 (RERHRGKRREGGKKKKKRSR). Residues 612-623 (SRAEKRSGDLEK) are compositionally biased toward basic and acidic residues. The residue at position 663 (Thr-663) is a Phosphothreonine. Phosphoserine is present on residues Ser-676 and Ser-682. Residue Tyr-689 is modified to Phosphotyrosine. Residues Ser-691 and Ser-695 each carry the phosphoserine modification. Basic and acidic residues-rich tracts occupy residues 696 to 709 (ADER…DRRR) and 719 to 741 (SREK…DRSS). Low complexity-rich tracts occupy residues 752-775 (PGSG…SCSS) and 793-804 (SSTTPAKDSSSS). Residue Lys-812 forms a Glycyl lysine isopeptide (Lys-Gly) (interchain with G-Cter in SUMO2) linkage. The span at 813–831 (FSRDRESRSPFLKPDERAP) shows a compositional bias: basic and acidic residues. Residues Ser-819 and Ser-821 each carry the phosphoserine modification. Basic residues predominate over residues 843–875 (KPKKTKAKAKAGAKKAKGTKGKTKPSKTRKKVR). Ser-876, Ser-883, Ser-910, and Ser-912 each carry phosphoserine. The segment covering 922–935 (STPPPKVAPPPPAL) has biased composition (pro residues). Thr-923 and Thr-936 each carry phosphothreonine. Residues 938-947 (DSQTVDSSCK) show a composition bias toward polar residues. At Ser-939 the chain carries Phosphoserine. Thr-948 carries the post-translational modification Phosphothreonine. Residues 969–984 (EEEEEEEEEEEEEEEQ) show a composition bias toward acidic residues. Residues 985-1017 (QPATTTATSTAAAAPSTAPSAGSTAGDSGAEDG) show a composition bias toward low complexity. Residues 1131 to 1256 (PASDKREGSS…GGPGLPLPPL (126 aa)) are necessary for interaction with the CTD domain of POLR2A. Over residues 1133 to 1152 (SDKREGSSSSEGRGDTDKYL) the composition is skewed to basic and acidic residues. Residues 1244–1256 (PDKGGPGLPLPPL) are compositionally biased toward pro residues.

The protein belongs to the splicing factor SR family. In terms of assembly, interacts with POLR2A.

It localises to the nucleus. Functionally, may function in pre-mRNA splicing. The polypeptide is Splicing factor, arginine/serine-rich 19 (Scaf1) (Mus musculus (Mouse)).